Reading from the N-terminus, the 2244-residue chain is Multifunctional protein ura1 (2244 aa).

A GATase (Glutamine amidotransferase) region spans residues 1–437; that stretch reads MSGLLPSLSS…GPRDTEFLFD (437 aa). The disordered stretch occupies residues 16-44; it reads QSEALGMPRTHGPKPSENDPKEPTCSPSP. L-glutamine is bound by residues serine 101, glycine 309, and glycine 311. In terms of domain architecture, Glutamine amidotransferase type-1 spans 264–449; it reads RILVIDVGMK…IDVVKRSADA (186 aa). Cysteine 338 functions as the Nucleophile; for GATase activity in the catalytic mechanism. Residues glutamine 342, asparagine 380, glycine 382, and tyrosine 383 each coordinate L-glutamine. Catalysis depends on for GATase activity residues histidine 422 and glutamate 424. Residues 438–477 are linker; sequence VFIDVVKRSADAKSLQPFKLPGGTIEENRSRHPLVDAKRV. The tract at residues 478–1014 is CPSase A; sequence LILGSGGLSI…VEHDIHFNDK (537 aa). Positions 478–1514 are CPSase (Carbamoyl phosphate synthase); that stretch reads LILGSGGLSI…TNVKCAKLMI (1037 aa). Positions 594, 634, 640, 641, 671, 673, 678, 704, 705, 706, 747, and 761 each coordinate ATP. The 193-residue stretch at 598 to 790 folds into the ATP-grasp 1 domain; that stretch reads ARAMDEINEK…LAFTAAKLGL (193 aa). Mg(2+) is bound by residues glutamine 747, glutamate 761, and asparagine 763. Glutamine 747, glutamate 761, and asparagine 763 together coordinate Mn(2+). The segment at 1015 to 1514 is CPSase B; sequence GVMVLGSGVY…TNVKCAKLMI (500 aa). Residue serine 1119 is modified to Phosphoserine. Residues 1133-1324 enclose the ATP-grasp 2 domain; the sequence is SRMLDDIGVD…MISMATDVIM (192 aa). Arginine 1169, lysine 1208, isoleucine 1210, glutamate 1215, glycine 1240, valine 1241, histidine 1242, serine 1243, glutamine 1283, and glutamate 1295 together coordinate ATP. Mg(2+) is bound by residues glutamine 1283, glutamate 1295, and asparagine 1297. 3 residues coordinate Mn(2+): glutamine 1283, glutamate 1295, and asparagine 1297. In terms of domain architecture, MGS-like spans 1390 to 1552; it reads FRLPKKNILI…INISAFLPEF (163 aa). Positions 1515 to 1524 are linker; sequence EAICRNLDFS. A defective DHOase domain region spans residues 1525-1853; sequence LSTVDFQSSF…FDGHDVFFDG (329 aa). The segment at 1854–1935 is linker; the sequence is ELNFEHTYGR…VQLINSSPFY (82 aa). Serine 1881 and serine 1885 each carry phosphoserine. The interval 1936-2244 is ATCase (Aspartate transcarbamylase); that stretch reads RKHIISVHQV…CVMGATEVAN (309 aa). Carbamoyl phosphate contacts are provided by arginine 1988 and threonine 1989. Lysine 2016 contacts L-aspartate. Arginine 2037, histidine 2065, and glutamine 2068 together coordinate carbamoyl phosphate. L-aspartate contacts are provided by arginine 2098 and arginine 2160. Carbamoyl phosphate-binding residues include leucine 2199 and proline 2200.

The protein in the N-terminal section; belongs to the CarA family. It in the 2nd section; belongs to the CarB family. In the 3rd section; belongs to the metallo-dependent hydrolases superfamily. DHOase family. CAD subfamily. This sequence in the C-terminal section; belongs to the aspartate/ornithine carbamoyltransferase superfamily. ATCase family. It depends on Mg(2+) as a cofactor. Mn(2+) serves as cofactor.

The enzyme catalyses hydrogencarbonate + L-glutamine + 2 ATP + H2O = carbamoyl phosphate + L-glutamate + 2 ADP + phosphate + 2 H(+). It carries out the reaction L-glutamine + H2O = L-glutamate + NH4(+). It catalyses the reaction hydrogencarbonate + NH4(+) + 2 ATP = carbamoyl phosphate + 2 ADP + phosphate + 2 H(+). The catalysed reaction is carbamoyl phosphate + L-aspartate = N-carbamoyl-L-aspartate + phosphate + H(+). Its pathway is pyrimidine metabolism; UMP biosynthesis via de novo pathway; (S)-dihydroorotate from bicarbonate: step 1/3. It functions in the pathway pyrimidine metabolism; UMP biosynthesis via de novo pathway; (S)-dihydroorotate from bicarbonate: step 2/3. Its activity is regulated as follows. Both CPSase and ATCase activities are feedback inhibited by the end product UTP. Multifunctional protein that encodes the first 2 enzymatic activities of the de novo pyrimidine pathway: carbamoylphosphate synthetase (CPSase; EC 6.3.5.5) and aspartate transcarbamylase (ATCase; EC 2.1.3.2). The CPSase-function is accomplished in 2 steps, by a glutamine-dependent amidotransferase activity (GATase) that binds and cleaves glutamine to produce ammonia, followed by an ammonium-dependent carbamoyl phosphate synthetase, which reacts with the ammonia, hydrogencarbonate and ATP to form carbamoyl phosphate. The endogenously produced carbamoyl phosphate is sequestered and channeled to the ATCase active site. ATCase then catalyzes the formation of carbamoyl-L-aspartate from L-aspartate and carbamoyl phosphate. This Schizosaccharomyces pombe (strain 972 / ATCC 24843) (Fission yeast) protein is Multifunctional protein ura1 (ura1).